We begin with the raw amino-acid sequence, 454 residues long: Transmembrane protein adipocyte-associated 1 homolog (454 aa).

N-linked (GlcNAc...) asparagine glycosylation is found at Asn26 and Asn44. A run of 5 helical transmembrane segments spans residues Ala80–Ile100, Ala113–Met133, Ile151–Phe171, Ile180–Ile200, and Phe224–Leu244. An N-linked (GlcNAc...) asparagine glycan is attached at Asn258. Transmembrane regions (helical) follow at residues Phe262–Ile282 and Leu290–Phe310. 2 N-linked (GlcNAc...) asparagine glycosylation sites follow: Asn322 and Asn323. The tract at residues Arg408–Leu454 is disordered. The segment covering Gly410–Met421 has biased composition (basic and acidic residues). Residues Phe445–Leu454 show a composition bias toward acidic residues.

Belongs to the UPF0359 family.

The protein localises to the membrane. This is Transmembrane protein adipocyte-associated 1 homolog (tpra-1) from Caenorhabditis briggsae.